A 639-amino-acid polypeptide reads, in one-letter code: Serine protease HtrA-like (639 aa).

Basic and acidic residues-rich tracts occupy residues 1–13, 21–75, 106–187, and 195–205; these read MDND…PREQ, YFHN…EIHQ, QQLK…KESS, and KSQKIEQKEQK. A disordered region spans residues 1–262; it reads MDNDKKHVIP…LENEPKNNDT (262 aa). The segment covering 206-219 has biased composition (polar residues); that stretch reads ASSNETSNKELNSY. Basic and acidic residues-rich tracts occupy residues 220–235 and 245–262; these read TKDK…DLKK and NKLE…NNDT. Residues 277–297 traverse the membrane as a helical segment; that stretch reads IVIVVAIILIVILISAIISTM. Residues His-374, Asp-404, and Ser-489 each act as charge relay system in the active site. The region spanning 527–629 is the PDZ domain; it reads EIAEELEKKG…TLSAKIYREG (103 aa).

It belongs to the peptidase S1C family.

The protein localises to the cell membrane. The polypeptide is Serine protease HtrA-like (Staphylococcus haemolyticus (strain JCSC1435)).